The primary structure comprises 308 residues: Neurexophilin-4 (308 aa).

An N-terminal signal peptide occupies residues 1-23 (MRLLPEWFLLLFGPWLLRKAVSA). The tract at residues 24 to 84 (QIPESGRPQY…GALARAGAAG (61 aa)) is II. A compositionally biased stretch (low complexity) spans 40-51 (AAGAGAPGQQLP). Residues 40-59 (AAGAGAPGQQLPEPRSSDGL) are disordered. 4 N-linked (GlcNAc...) asparagine glycosylation sites follow: Asn-72, Asn-133, Asn-143, and Asn-149. The III stretch occupies residues 85–163 (ALPAQRTKRK…IVPPSKRVEF (79 aa)). The interval 164-224 (GGVWLPGPVP…PLGGALGVPG (61 aa)) is IV (linker domain). A v (Cys-rich) region spans residues 225 to 308 (AKESRAFNCH…NFQSEHPYFG (84 aa)).

It belongs to the neurexophilin family. Post-translationally, may be proteolytically processed at the boundary between the N-terminal non-conserved and the central conserved domain in neuron-like cells. As to expression, expressed in brain, spleen, and testis.

It localises to the secreted. In terms of biological role, may be signaling molecules that resemble neuropeptides and that act by binding to alpha-neurexins and possibly other receptors. The polypeptide is Neurexophilin-4 (NXPH4) (Homo sapiens (Human)).